The sequence spans 332 residues: Small ribosomal subunit protein uS2 (332 aa).

It belongs to the universal ribosomal protein uS2 family.

The protein is Small ribosomal subunit protein uS2 of Nitrobacter winogradskyi (strain ATCC 25391 / DSM 10237 / CIP 104748 / NCIMB 11846 / Nb-255).